The primary structure comprises 726 residues: Bromodomain-containing protein 3 (726 aa).

Positions 1 to 35 are disordered; the sequence is MSTATTVAPAGIPATPGPVNPPPPEVSNPSKPGRK. S2 carries the post-translational modification N-acetylserine. The span at 15-26 shows a compositional bias: pro residues; sequence TPGPVNPPPPEV. Residues 34-140 enclose the Bromo 1 domain; the sequence is RKTNQLQYMQ…KIFLQKVAQM (107 aa). The segment at 78–80 is acetylated histone H3 binding; sequence KNP. Disordered stretches follow at residues 149–169 and 237–305; these read PPAP…AGTQ and VKKK…AGKK. Over residues 248–261 the composition is skewed to low complexity; that stretch reads TTTPTTSAITASRS. Phosphoserine occurs at positions 263 and 281. Residues 306 to 415 form the Bromo 2 domain; the sequence is GKLSEHLRYC…DVFEMRFAKM (110 aa). A Glycyl lysine isopeptide (Lys-Gly) (interchain with G-Cter in SUMO2) cross-link involves residue K414. Disordered regions lie at residues 421 to 462, 477 to 575, and 637 to 726; these read EAPA…RATR, LAAL…MSYD, and LQKK…SDSE. Residues 453–524 are a coiled coil; the sequence is SDSEEERATR…AEEEKKAKVA (72 aa). The segment covering 487–503 has biased composition (basic residues); that stretch reads KPKKKKEKKEKEKKKKD. The span at 504–521 shows a compositional bias: basic and acidic residues; it reads KEKEKEKHKVKAEEEKKA. Residues 523 to 540 show a composition bias toward low complexity; sequence VAPPAKQAQQKKAPAKKA. The 83-residue stretch at 562 to 644 folds into the NET domain; it reads DSEEEEEGLP…SCLQKKQRKP (83 aa). S563 bears the Phosphoserine mark. The stretch at 645 to 684 forms a coiled coil; the sequence is FSASGKKQAAKSKEELAQEKKKELEKRLQDVSGQLSSSKK. A compositionally biased stretch (basic and acidic residues) spans 655–673; sequence KSKEELAQEKKKELEKRLQ. Residues 692-726 show a composition bias toward low complexity; sequence GSAPSGGPSRLSSSSSSESGSSSSSGSSSDSSDSE.

The protein belongs to the BET family. As to quaternary structure, interacts (via bromo domain 1) with GATA1 acetylated at 'Lys-312' and 'Lys-315'. Interacts (via bromo domain 1) with GATA2 acetylated on lysine residues. Interacts (via NET domain) with CHD4 (via KIKL motif). Interacts (via NET domain) with SMARCA4 (via KIKL motif). Interacts (via NET domain) with NSD3 (via KIKL motif). (Microbial infection) Interacts with the Integrase protein of Moloney murine leukemia virus (MLV). As to expression, ubiquitous.

Its subcellular location is the nucleus. It localises to the chromosome. Its activity is regulated as follows. Inhibited by JQ1, a thieno-triazolo-1,4-diazepine derivative, which specifically inhibits members of the BET family (BRD2, BRD3 and BRD4). The first bromo domain is inhibited by GSK778 (iBET-BD1), which specifically inhibits the first bromo domain of members of the BET family (BRD2, BRD3 and BRD4). The second bromo domain is inhibited by ABBV-744, which specifically inhibits the second bromo domain of members of the BET family (BRD2, BRD3 and BRD4). The second bromo domain is inhibited by GSK046 (iBET-BD2), which specifically inhibits the second bromo domain of members of the BET family (BRD2, BRD3 and BRD4). Chromatin reader that recognizes and binds acetylated histones, thereby controlling gene expression and remodeling chromatin structures. Recruits transcription factors and coactivators to target gene sites, and activates RNA polymerase II machinery for transcriptional elongation. In vitro, binds acetylated lysine residues on the N-terminus of histone H2A, H2B, H3 and H4. Involved in endoderm differentiation via its association with long non-coding RNA (lncRNA) DIGIT: BRD3 undergoes liquid-liquid phase separation upon binding to lncRNA DIGIT, promoting binding to histone H3 acetylated at 'Lys-18' (H3K18ac) to induce endoderm gene expression. Also binds non-histones acetylated proteins, such as GATA1 and GATA2: regulates transcription by promoting the binding of the transcription factor GATA1 to its targets. In Homo sapiens (Human), this protein is Bromodomain-containing protein 3.